The following is a 267-amino-acid chain: NAD kinase (267 aa).

Catalysis depends on Asp-45, which acts as the Proton acceptor. NAD(+) contacts are provided by residues 45–46 (DG), 122–123 (NE), Arg-148, Asp-150, 161–166 (TAYNKS), Ala-185, and Gln-223.

This sequence belongs to the NAD kinase family. A divalent metal cation serves as cofactor.

The protein localises to the cytoplasm. It catalyses the reaction NAD(+) + ATP = ADP + NADP(+) + H(+). Functionally, involved in the regulation of the intracellular balance of NAD and NADP, and is a key enzyme in the biosynthesis of NADP. Catalyzes specifically the phosphorylation on 2'-hydroxyl of the adenosine moiety of NAD to yield NADP. In Levilactobacillus brevis (strain ATCC 367 / BCRC 12310 / CIP 105137 / JCM 1170 / LMG 11437 / NCIMB 947 / NCTC 947) (Lactobacillus brevis), this protein is NAD kinase.